The following is a 136-amino-acid chain: Small ribosomal subunit protein uS8c (136 aa).

This sequence belongs to the universal ribosomal protein uS8 family. In terms of assembly, part of the 30S ribosomal subunit.

The protein resides in the plastid. It localises to the chloroplast. In terms of biological role, one of the primary rRNA binding proteins, it binds directly to 16S rRNA central domain where it helps coordinate assembly of the platform of the 30S subunit. This is Small ribosomal subunit protein uS8c (rps8) from Oryza sativa subsp. indica (Rice).